A 188-amino-acid chain; its full sequence is MNSNFCRALVDRGPPGGMQLGVVAPAGQTPLAATEPLSNVPFLLYPGHSEPPYYDAYTGVFPYVPFPGAFGVYDYPFEPAFIQKRNERERQRVKCVNEGYARLRGHLPGALTEKRLSKVETLRAAIRYIKYLQELLSATPDGAPPPATSPPPAHTGHSNVPQPSSLVAESSGSPFSSSPFLESEEPSL.

The segment at 80-93 is basic motif; that stretch reads AFIQKRNERERQRV. One can recognise a bHLH domain in the interval 80–132; it reads AFIQKRNERERQRVKCVNEGYARLRGHLPGALTEKRLSKVETLRAAIRYIKYL. The tract at residues 94–132 is helix-loop-helix motif; the sequence is KCVNEGYARLRGHLPGALTEKRLSKVETLRAAIRYIKYL. The tract at residues 139 to 188 is disordered; it reads TPDGAPPPATSPPPAHTGHSNVPQPSSLVAESSGSPFSSSPFLESEEPSL. Positions 142–153 are enriched in pro residues; the sequence is GAPPPATSPPPA. Residues 158–168 are compositionally biased toward polar residues; sequence SNVPQPSSLVA. Over residues 169-181 the composition is skewed to low complexity; it reads ESSGSPFSSSPFL.

Interacts with transcription factor TCF3/E12. As to expression, expressed in teeth (at protein level).

It is found in the nucleus. Functionally, transcription factor. Probably binds E-box motifs 5'-CANNTG-3' in complex with transcription factor TCF3/E12. Negatively modulates transcription of target genes such as CDH1/E-cadherin, perhaps by recruiting the PRC2 repressive complex to regulatory elements. Regulates ameloblast development and tooth germ growth, perhaps acting by positively modulating migration of inner enamel epithelium (IEE) cells. Plays a role in enamel formation. In Mus musculus (Mouse), this protein is Achaete-scute homolog 5.